A 275-amino-acid chain; its full sequence is MRPLQAEIIKALGVQATIDPETEVRRSVDFLKAYLKKNTFLKTYVLGISGGQDSSLAGALTEKAMQEMRAETGDDAYQFIAVRLPYGEQADEADAMAAIDFMHADVVKRVNIKPSVDAMVAAVEADGSKISDFNKGNIKARMRMIAQYAIAGNNAGAVIGTDHAAEAVTGFYTKFGDGGADLTPLYRLDKRQGAALLKVLGAPAHLYEKAPTADLEDNRPALPDEVALGVKYKDIDDYLEGKDVSDQAAETIEKWYQKTAHKRHLPITVFDNFWK.

Residue 47-54 (GISGGQDS) participates in ATP binding. Residue Asp-53 coordinates Mg(2+). Arg-141 is a binding site for deamido-NAD(+). Thr-161 is an ATP binding site. Glu-166 serves as a coordination point for Mg(2+). Deamido-NAD(+) is bound by residues Lys-174 and Asp-181. Lys-190 and Thr-212 together coordinate ATP. 261-262 (HK) contributes to the deamido-NAD(+) binding site.

It belongs to the NAD synthetase family. Homodimer.

The catalysed reaction is deamido-NAD(+) + NH4(+) + ATP = AMP + diphosphate + NAD(+) + H(+). The protein operates within cofactor biosynthesis; NAD(+) biosynthesis; NAD(+) from deamido-NAD(+) (ammonia route): step 1/1. Its function is as follows. Catalyzes the ATP-dependent amidation of deamido-NAD to form NAD. Uses ammonia as a nitrogen source. The polypeptide is NH(3)-dependent NAD(+) synthetase (Lacticaseibacillus casei (strain BL23) (Lactobacillus casei)).